The following is a 586-amino-acid chain: Aspartate--tRNA(Asp/Asn) ligase (586 aa).

Glutamate 172 provides a ligand contact to L-aspartate. The segment at 196–199 is aspartate; that stretch reads QLYK. Arginine 218 is a binding site for L-aspartate. ATP-binding positions include 218 to 220 and glutamine 227; that span reads RDE. Histidine 446 provides a ligand contact to L-aspartate. Glutamate 480 contacts ATP. Residue arginine 487 participates in L-aspartate binding. Position 532-535 (532-535) interacts with ATP; sequence GIDR.

It belongs to the class-II aminoacyl-tRNA synthetase family. Type 1 subfamily. As to quaternary structure, homodimer.

Its subcellular location is the cytoplasm. It catalyses the reaction tRNA(Asx) + L-aspartate + ATP = L-aspartyl-tRNA(Asx) + AMP + diphosphate. In terms of biological role, aspartyl-tRNA synthetase with relaxed tRNA specificity since it is able to aspartylate not only its cognate tRNA(Asp) but also tRNA(Asn). Reaction proceeds in two steps: L-aspartate is first activated by ATP to form Asp-AMP and then transferred to the acceptor end of tRNA(Asp/Asn). The chain is Aspartate--tRNA(Asp/Asn) ligase from Borreliella burgdorferi (strain ATCC 35210 / DSM 4680 / CIP 102532 / B31) (Borrelia burgdorferi).